The following is a 109-amino-acid chain: Phosphoribosyl-ATP pyrophosphatase (109 aa).

This sequence belongs to the PRA-PH family.

It is found in the cytoplasm. The enzyme catalyses 1-(5-phospho-beta-D-ribosyl)-ATP + H2O = 1-(5-phospho-beta-D-ribosyl)-5'-AMP + diphosphate + H(+). It functions in the pathway amino-acid biosynthesis; L-histidine biosynthesis; L-histidine from 5-phospho-alpha-D-ribose 1-diphosphate: step 2/9. The protein is Phosphoribosyl-ATP pyrophosphatase of Geobacter metallireducens (strain ATCC 53774 / DSM 7210 / GS-15).